A 274-amino-acid chain; its full sequence is Large ribosomal subunit protein uL2 (274 aa).

The tract at residues 228–254 (VDHPMGGGEGRASGGHPRSRKGLYAKG) is disordered. The span at 244-254 (PRSRKGLYAKG) shows a compositional bias: basic residues.

It belongs to the universal ribosomal protein uL2 family. In terms of assembly, part of the 50S ribosomal subunit. Forms a bridge to the 30S subunit in the 70S ribosome.

One of the primary rRNA binding proteins. Required for association of the 30S and 50S subunits to form the 70S ribosome, for tRNA binding and peptide bond formation. It has been suggested to have peptidyltransferase activity; this is somewhat controversial. Makes several contacts with the 16S rRNA in the 70S ribosome. The sequence is that of Large ribosomal subunit protein uL2 from Azobacteroides pseudotrichonymphae genomovar. CFP2.